We begin with the raw amino-acid sequence, 363 residues long: Spermidine/putrescine import ATP-binding protein PotA (363 aa).

Residues 4–234 form the ABC transporter domain; it reads LEIRNVTRRF…PRNHFVADFI (231 aa). An ATP-binding site is contributed by 36–43; that stretch reads GPSGCGKT.

The protein belongs to the ABC transporter superfamily. Spermidine/putrescine importer (TC 3.A.1.11.1) family. As to quaternary structure, the complex is composed of two ATP-binding proteins (PotA), two transmembrane proteins (PotB and PotC) and a solute-binding protein (PotD).

It is found in the cell inner membrane. The catalysed reaction is ATP + H2O + polyamine-[polyamine-binding protein]Side 1 = ADP + phosphate + polyamineSide 2 + [polyamine-binding protein]Side 1.. In terms of biological role, part of the ABC transporter complex PotABCD involved in spermidine/putrescine import. Responsible for energy coupling to the transport system. The sequence is that of Spermidine/putrescine import ATP-binding protein PotA from Nitrosospira multiformis (strain ATCC 25196 / NCIMB 11849 / C 71).